The primary structure comprises 354 residues: Carbonic anhydrase 12 (354 aa).

A signal peptide spans 1–24 (MPRRSLHAAAVLLLVILKEQPSSP). Residues 25–301 (APVNGSKWTY…VQVCTAAGLS (277 aa)) are Extracellular-facing. Residues Asn28 and Asn80 are each glycosylated (N-linked (GlcNAc...) asparagine). The 260-residue stretch at 30 to 289 (SKWTYFGPDG…FDERLVYTSF (260 aa)) folds into the Alpha-carbonic anhydrase domain. Cys50 and Cys230 form a disulfide bridge. The Proton donor/acceptor role is filled by His94. Positions 119, 121, and 145 each coordinate Zn(2+). Asn162 carries an N-linked (GlcNAc...) asparagine glycan. Position 226-227 (226-227 (TT)) interacts with substrate. Residues 302–322 (LGIILSLALAGILGICIVVVV) form a helical membrane-spanning segment. Over 323-354 (SIWLFRRKSIKKGDNKGVIYKPATKMETEAHA) the chain is Cytoplasmic.

It belongs to the alpha-carbonic anhydrase family. As to quaternary structure, homodimer. Requires Zn(2+) as cofactor. Highly expressed in colon, kidney, prostate, intestine and activated lymphocytes. Expressed at much higher levels in the renal cell cancers than in surrounding normal kidney tissue. Moderately expressed in pancreas, ovary and testis. Expressed in sweat glands and bronchiolar epithelium.

It localises to the membrane. It is found in the cell membrane. The catalysed reaction is hydrogencarbonate + H(+) = CO2 + H2O. With respect to regulation, inhibited by coumarins, saccharin, sulfonamide derivatives such as acetazolamide (AZA), benzenesulfonamide and derivatives (4-carboxyethylbenzene-sulfonamide, 4-carboxyethylbenzene-sulfonamide ethyl ester, 4-(acetyl-2-aminoethyl)benzene-sulfonamide, 4-aminoethylbenzene-sulfonamide) and Foscarnet (phosphonoformate trisodium salt). Reversible hydration of carbon dioxide. This chain is Carbonic anhydrase 12, found in Homo sapiens (Human).